A 69-amino-acid polypeptide reads, in one-letter code: UPF0248 protein AF_0420 (69 aa).

The protein belongs to the UPF0248 family.

The polypeptide is UPF0248 protein AF_0420 (Archaeoglobus fulgidus (strain ATCC 49558 / DSM 4304 / JCM 9628 / NBRC 100126 / VC-16)).